The sequence spans 815 residues: G-type lectin S-receptor-like serine/threonine-protein kinase SD1-1 (815 aa).

Residues 1–22 (MREIHSLFSLSLFLISSSLSVA) form the signal peptide. At 23-438 (LDYNVITPKE…FAKIEFKGRE (416 aa)) the chain is on the extracellular side. Residues 25-152 (YNVITPKEFL…EEAVLWQSFD (128 aa)) enclose the Bulb-type lectin domain. 3 N-linked (GlcNAc...) asparagine glycosylation sites follow: Asn-93, Asn-249, and Asn-265. An EGF-like domain is found at 288–326 (PEDECDYYSICGAYAVCGINSKNTPSCSCLQGFKPKSGR). 2 disulfides stabilise this stretch: Cys-292-Cys-304 and Cys-298-Cys-314. Residues Asn-329 and Asn-385 are each glycosylated (N-linked (GlcNAc...) asparagine). The region spanning 345 to 428 (CEKKDAFVKF…FGQDVYIRMG (84 aa)) is the PAN domain. Cystine bridges form between Cys-378–Cys-403 and Cys-382–Cys-388. Residues 439-459 (VVGMVVGSVVAIAVVLVVVFA) traverse the membrane as a helical segment. Topologically, residues 460 to 815 (CFRKKIMKRY…EVSITMLQGR (356 aa)) are cytoplasmic. One can recognise a Protein kinase domain in the interval 500-783 (FSYVNFLGRG…SDSSLPHPTQ (284 aa)). Residues 506–514 (LGRGGFGPV) and Lys-528 each bind ATP. Ser-534 bears the Phosphoserine mark. The tract at residues 589–606 (RRSTELDWKKRMNIINGV) is caM-binding. The active-site Proton acceptor is Asp-625. A Phosphoserine modification is found at Ser-642. Residue Thr-659 is modified to Phosphothreonine. A phosphoserine mark is found at Ser-797 and Ser-803. At Thr-810 the chain carries Phosphothreonine.

It belongs to the protein kinase superfamily. Ser/Thr protein kinase family. In terms of assembly, interacts with PUB9, PUB13 and PUB14.

The protein localises to the cell membrane. It carries out the reaction L-seryl-[protein] + ATP = O-phospho-L-seryl-[protein] + ADP + H(+). The enzyme catalyses L-threonyl-[protein] + ATP = O-phospho-L-threonyl-[protein] + ADP + H(+). In Arabidopsis thaliana (Mouse-ear cress), this protein is G-type lectin S-receptor-like serine/threonine-protein kinase SD1-1 (SD11).